The chain runs to 20 residues: Transcriptional regulatory protein PufK (20 aa).

Residues 1 to 11 are compositionally biased toward basic residues; it reads MVPYRNPRHQH. Residues 1-20 form a disordered region; the sequence is MVPYRNPRHQHVASVLRSGG.

Involved in the transcriptional regulation of pufB. In Cereibacter sphaeroides (strain ATCC 17023 / DSM 158 / JCM 6121 / CCUG 31486 / LMG 2827 / NBRC 12203 / NCIMB 8253 / ATH 2.4.1.) (Rhodobacter sphaeroides), this protein is Transcriptional regulatory protein PufK (pufK).